Reading from the N-terminus, the 607-residue chain is Elongation factor 4 (607 aa).

The tr-type G domain occupies 11–193; the sequence is ENIRNFSIIA…KIVEVVPAPD (183 aa). GTP-binding positions include 23-28 and 140-143; these read DHGKST and NKID.

This sequence belongs to the TRAFAC class translation factor GTPase superfamily. Classic translation factor GTPase family. LepA subfamily.

It localises to the cell membrane. It carries out the reaction GTP + H2O = GDP + phosphate + H(+). In terms of biological role, required for accurate and efficient protein synthesis under certain stress conditions. May act as a fidelity factor of the translation reaction, by catalyzing a one-codon backward translocation of tRNAs on improperly translocated ribosomes. Back-translocation proceeds from a post-translocation (POST) complex to a pre-translocation (PRE) complex, thus giving elongation factor G a second chance to translocate the tRNAs correctly. Binds to ribosomes in a GTP-dependent manner. The chain is Elongation factor 4 from Staphylococcus aureus (strain USA300).